The sequence spans 148 residues: 3-dehydroquinate dehydratase (148 aa).

The Proton acceptor role is filled by Y24. Substrate-binding residues include N80, H86, and D93. Catalysis depends on H106, which acts as the Proton donor. Substrate is bound by residues 107–108 (IS) and R117.

This sequence belongs to the type-II 3-dehydroquinase family. As to quaternary structure, homododecamer.

The catalysed reaction is 3-dehydroquinate = 3-dehydroshikimate + H2O. It participates in metabolic intermediate biosynthesis; chorismate biosynthesis; chorismate from D-erythrose 4-phosphate and phosphoenolpyruvate: step 3/7. Catalyzes a trans-dehydration via an enolate intermediate. This chain is 3-dehydroquinate dehydratase, found in Acidovorax sp. (strain JS42).